Consider the following 353-residue polypeptide: Putative protein SPATA31J1 (353 aa).

A helical membrane pass occupies residues 34 to 54 (IPQIIHFVLFVVFSLVILIIL). Positions 122-271 (EGSSHHLPRQ…NPGWVSWSDS (150 aa)) are disordered. Positions 182–195 (SVESLGSPSSLSSS) are enriched in low complexity. A compositionally biased stretch (polar residues) spans 211–221 (PPASTLSPNPT). Over residues 222–237 (SSTESLGYLSSLSSSQ) the composition is skewed to low complexity. Positions 244–262 (PLKHPSHKPRGRSLPRRRN) are enriched in basic residues.

The protein belongs to the SPATA31 family.

It is found in the membrane. The protein is Putative protein SPATA31J1 of Homo sapiens (Human).